An 827-amino-acid chain; its full sequence is Villin-1 (827 aa).

Residues Met1–Met126 form a necessary for homodimerization region. A core region spans residues Met1–Asn734. The Gelsolin-like 1 repeat unit spans residues Met27–Gly76. LPA/PIP2-binding site stretches follow at residues Lys112 to Lys119 and Arg138 to Arg146. Gelsolin-like repeat units follow at residues Val148–Leu188 and Val265–Lys309. Ser366 carries the post-translational modification Phosphoserine. Gelsolin-like repeat units follow at residues Asn407–Thr457, Thr528–Glu568, and Phe631–Lys672. Ser735 carries the phosphoserine modification. The headpiece stretch occupies residues Ser735–Phe827. Positions Ser761–Phe827 constitute an HP domain. The tract at residues Lys816–Lys824 is LPA/PIP2-binding site 3.

The protein belongs to the villin/gelsolin family. In terms of assembly, monomer. Homodimer; homodimerization is necessary for actin-bundling. Associates with F-actin; phosphorylation at tyrosine residues decreases the association with F-actin. Interacts (phosphorylated at C-terminus tyrosine phosphorylation sites) with PLCG1 (via the SH2 domains). Interacts (phosphorylated form) with PLCG1; the interaction is enhanced by hepatocyte growth factor (HGF). Post-translationally, phosphorylated on tyrosine residues by SRC. The unphosphorylated form increases the initial rate of actin-nucleating activity, whereas the tyrosine-phosphorylated form inhibits actin-nucleating activity, enhances actin-bundling activity and enhances actin-severing activity by reducing high Ca(2+) requirements. The tyrosine-phosphorylated form does not regulate actin-capping activity. Tyrosine phosphorylation is essential for cell migration: tyrosine phosphorylation sites in the N-terminus half regulate actin reorganization and cell morphology, whereas tyrosine phosphorylation sites in the C-terminus half regulate cell migration via interaction with PLCG1. Tyrosine phosphorylation is induced by epidermal growth factor (EGF) and stimulates cell migration.

It is found in the cytoplasm. The protein resides in the cytoskeleton. The protein localises to the cell projection. Its subcellular location is the lamellipodium. It localises to the ruffle. It is found in the microvillus. The protein resides in the filopodium tip. The protein localises to the filopodium. Its function is as follows. Epithelial cell-specific Ca(2+)-regulated actin-modifying protein that modulates the reorganization of microvillar actin filaments. Plays a role in the actin nucleation, actin filament bundle assembly, actin filament capping and severing. Binds phosphatidylinositol 4,5-bisphosphate (PIP2) and lysophosphatidic acid (LPA); binds LPA with higher affinity than PIP2. Binding to LPA increases its phosphorylation by SRC and inhibits all actin-modifying activities. Binding to PIP2 inhibits actin-capping and -severing activities but enhances actin-bundling activity. Regulates the intestinal epithelial cell morphology, cell invasion, cell migration and apoptosis. Protects against apoptosis induced by dextran sodium sulfate (DSS) in the gastrointestinal epithelium. Appears to regulate cell death by maintaining mitochondrial integrity. Enhances hepatocyte growth factor (HGF)-induced epithelial cell motility, chemotaxis and wound repair. The protein is Villin-1 (VIL1) of Bos taurus (Bovine).